The sequence spans 463 residues: NADH-quinone oxidoreductase subunit N (463 aa).

Helical transmembrane passes span 2-22 (NTLI…ILNF), 25-45 (GIVP…FYEF), 61-81 (FSTA…ALSH), 91-110 (ISDF…AMVS), 114-133 (LAMF…VLAA), 149-169 (FLMG…IYGA), 189-209 (IWFP…IAAV), 223-243 (PALT…ATLF), 264-284 (FTNV…IMAL), 292-312 (MLAF…LTIA), 317-337 (VLLY…SVIL), 362-382 (AAIL…SGFF), 395-415 (GYVA…GYYF), and 434-454 (PFLI…LGLF).

Belongs to the complex I subunit 2 family. NDH-1 is composed of 14 different subunits. Subunits NuoA, H, J, K, L, M, N constitute the membrane sector of the complex.

Its subcellular location is the cell inner membrane. The catalysed reaction is a quinone + NADH + 5 H(+)(in) = a quinol + NAD(+) + 4 H(+)(out). Its function is as follows. NDH-1 shuttles electrons from NADH, via FMN and iron-sulfur (Fe-S) centers, to quinones in the respiratory chain. The immediate electron acceptor for the enzyme in this species is believed to be a menaquinone. Couples the redox reaction to proton translocation (for every two electrons transferred, four hydrogen ions are translocated across the cytoplasmic membrane), and thus conserves the redox energy in a proton gradient. This Flavobacterium johnsoniae (strain ATCC 17061 / DSM 2064 / JCM 8514 / BCRC 14874 / CCUG 350202 / NBRC 14942 / NCIMB 11054 / UW101) (Cytophaga johnsonae) protein is NADH-quinone oxidoreductase subunit N.